The sequence spans 259 residues: Ubiquinone biosynthesis protein COQ4 homolog, mitochondrial (259 aa).

4 residues coordinate Zn(2+): His-162, Asp-163, His-166, and Glu-178.

Belongs to the COQ4 family. Component of a multi-subunit COQ enzyme complex. Zn(2+) is required as a cofactor.

It is found in the mitochondrion inner membrane. The enzyme catalyses a 4-hydroxy-3-methoxy-5-(all-trans-polyprenyl)benzoate + H(+) = a 2-methoxy-6-(all-trans-polyprenyl)phenol + CO2. It participates in cofactor biosynthesis; ubiquinone biosynthesis. Lyase that catalyzes the C1-decarboxylation of 4-hydroxy-3-methoxy-5-(all-trans-polyprenyl)benzoic acid into 2-methoxy-6-(all-trans-polyprenyl)phenol during ubiquinone biosynthesis. The protein is Ubiquinone biosynthesis protein COQ4 homolog, mitochondrial of Bombyx mori (Silk moth).